Consider the following 157-residue polypeptide: Crossover junction endodeoxyribonuclease RuvC (157 aa).

Catalysis depends on residues aspartate 7, glutamate 67, and aspartate 140. Residues aspartate 7, glutamate 67, and aspartate 140 each coordinate Mg(2+).

It belongs to the RuvC family. Homodimer which binds Holliday junction (HJ) DNA. The HJ becomes 2-fold symmetrical on binding to RuvC with unstacked arms; it has a different conformation from HJ DNA in complex with RuvA. In the full resolvosome a probable DNA-RuvA(4)-RuvB(12)-RuvC(2) complex forms which resolves the HJ. It depends on Mg(2+) as a cofactor.

It is found in the cytoplasm. The catalysed reaction is Endonucleolytic cleavage at a junction such as a reciprocal single-stranded crossover between two homologous DNA duplexes (Holliday junction).. Functionally, the RuvA-RuvB-RuvC complex processes Holliday junction (HJ) DNA during genetic recombination and DNA repair. Endonuclease that resolves HJ intermediates. Cleaves cruciform DNA by making single-stranded nicks across the HJ at symmetrical positions within the homologous arms, yielding a 5'-phosphate and a 3'-hydroxyl group; requires a central core of homology in the junction. The consensus cleavage sequence is 5'-(A/T)TT(C/G)-3'. Cleavage occurs on the 3'-side of the TT dinucleotide at the point of strand exchange. HJ branch migration catalyzed by RuvA-RuvB allows RuvC to scan DNA until it finds its consensus sequence, where it cleaves and resolves the cruciform DNA. This chain is Crossover junction endodeoxyribonuclease RuvC, found in Rickettsia prowazekii (strain Madrid E).